The primary structure comprises 444 residues: Glutamate--tRNA ligase 2 (444 aa).

The 'HIGH' region motif lies at 7–17 (PSPTGYLHVGN). A 'KMSKS' region motif is present at residues 240-244 (KLSKR). Lysine 243 lines the ATP pocket.

The protein belongs to the class-I aminoacyl-tRNA synthetase family. Glutamate--tRNA ligase type 1 subfamily. In terms of assembly, monomer.

The protein resides in the cytoplasm. It carries out the reaction tRNA(Glu) + L-glutamate + ATP = L-glutamyl-tRNA(Glu) + AMP + diphosphate. Functionally, catalyzes the attachment of glutamate to tRNA(Glu) in a two-step reaction: glutamate is first activated by ATP to form Glu-AMP and then transferred to the acceptor end of tRNA(Glu). This chain is Glutamate--tRNA ligase 2, found in Gluconobacter oxydans (strain 621H) (Gluconobacter suboxydans).